A 159-amino-acid polypeptide reads, in one-letter code: Putative ribosomal RNA large subunit methyltransferase H (159 aa).

Residues Leu-76, Gly-108, and 127 to 132 each bind S-adenosyl-L-methionine; that span reads LSPLTF.

This sequence belongs to the RNA methyltransferase RlmH family.

It localises to the cytoplasm. The catalysed reaction is pseudouridine(1915) in 23S rRNA + S-adenosyl-L-methionine = N(3)-methylpseudouridine(1915) in 23S rRNA + S-adenosyl-L-homocysteine + H(+). Specifically methylates the pseudouridine at position 1915 (m3Psi1915) in 23S rRNA. This Methanoregula boonei (strain DSM 21154 / JCM 14090 / 6A8) protein is Putative ribosomal RNA large subunit methyltransferase H.